The primary structure comprises 804 residues: Putative mRNA-capping enzyme P5 (804 aa).

Belongs to the phytoreovirus protein P5 family.

It localises to the virion. Its subcellular location is the host cytoplasm. It catalyses the reaction a 5'-end diphospho-ribonucleoside in mRNA + GTP + H(+) = a 5'-end (5'-triphosphoguanosine)-ribonucleoside in mRNA + diphosphate. Its pathway is mRNA processing; mRNA capping. Enzyme involved in mRNA capping (Potential). Binds to GTP and might have guanylyltransferase activity. Together with the RNA-directed RNA polymerase P1 and protein P7, forms an transcriptional complex positioned near the channels situated at each of the five-fold vertices of the core. In Catharanthus roseus (Madagascar periwinkle), this protein is Putative mRNA-capping enzyme P5.